We begin with the raw amino-acid sequence, 120 residues long: Ribonuclease P protein component (120 aa).

The protein belongs to the RnpA family. As to quaternary structure, consists of a catalytic RNA component (M1 or rnpB) and a protein subunit.

The enzyme catalyses Endonucleolytic cleavage of RNA, removing 5'-extranucleotides from tRNA precursor.. Its function is as follows. RNaseP catalyzes the removal of the 5'-leader sequence from pre-tRNA to produce the mature 5'-terminus. It can also cleave other RNA substrates such as 4.5S RNA. The protein component plays an auxiliary but essential role in vivo by binding to the 5'-leader sequence and broadening the substrate specificity of the ribozyme. The polypeptide is Ribonuclease P protein component (Chlamydia trachomatis serovar D (strain ATCC VR-885 / DSM 19411 / UW-3/Cx)).